Reading from the N-terminus, the 312-residue chain is Transcription initiation factor IIB (312 aa).

The TFIIB-type zinc finger occupies 10-42 (FVQTCSDCGETQNIVEDYKNGYHVCGRCGCIVG). 4 residues coordinate Zn(2+): Cys-14, Cys-17, Cys-34, and Cys-37. Tandem repeats lie at residues 120–196 (FCER…LISP) and 213–290 (FCSD…ELLT).

The protein belongs to the TFIIB family. As to quaternary structure, associates with TFIID-IIA (DA complex) to form TFIID-IIA-IIB (DAB-complex) which is then recognized by polymerase II.

Its subcellular location is the nucleus. Its function is as follows. General factor that plays a major role in the activation of eukaryotic genes transcribed by RNA polymerase II. The sequence is that of Transcription initiation factor IIB from Encephalitozoon cuniculi (strain GB-M1) (Microsporidian parasite).